Here is a 670-residue protein sequence, read N- to C-terminus: Acetolactate synthase, chloroplastic (670 aa).

Composition is skewed to low complexity over residues 1–48 (MAAA…SSSS) and 55–77 (KSSS…TTPS). The N-terminal 55 residues, 1–55 (MAAATTTTTTSSSISFSTKPSPSSSKSPLPISRFSLPFSLNPNKSSSSSRRRGIK), are a transit peptide targeting the chloroplast. Residues 1-94 (MAAATTTTTT…ETFISRFAPD (94 aa)) form a disordered region. Residue E144 coordinates thiamine diphosphate. S186 provides a ligand contact to FAD. Thiamine diphosphate is bound at residue Q207. Residues K220 and R246 each coordinate (R)-imazaquin. R246 is an FAD binding site. Residue K256 participates in chlorimuron-ethyl binding. FAD contacts are provided by residues G308 and 331–332 (TL). A Cysteine sulfinic acid (-SO2H) modification is found at C340. FAD-binding positions include 349 to 352 (LGMH) and 371 to 375 (GVRFD). A chlorimuron-ethyl-binding site is contributed by 376–377 (DR). FAD contacts are provided by residues 395-396 (DI) and 414-415 (DV). The stretch at 414 to 446 (DVKLALQGMNKVLENRAEELKLDFGVWRNELNV) forms a coiled coil. Residue 487-488 (QH) coordinates thiamine diphosphate. 508-509 (GG) contributes to the FAD binding site. Thiamine diphosphate-binding positions include 511-513 (GAM), 538-540 (DGS), and 565-570 (NQHLGM). 3 residues coordinate Mg(2+): D538, N565, and H567. Chlorimuron-ethyl-binding residues include W574 and S653.

Belongs to the TPP enzyme family. In terms of assembly, homodimer or homotetramer. The acetolactate synthase complex contains both large catalytic subunits and small regulatory subunits. Homodimer. The acetolactate synthase complex contains 4 homodimers of the large catalytic subunits, and 1 homotetramer of the small regulatory subunits. Requires Mg(2+) as cofactor. The cofactor is FAD. Thiamine diphosphate serves as cofactor.

It is found in the plastid. The protein localises to the chloroplast. It catalyses the reaction 2 pyruvate + H(+) = (2S)-2-acetolactate + CO2. Its pathway is amino-acid biosynthesis; L-isoleucine biosynthesis; L-isoleucine from 2-oxobutanoate: step 1/4. It functions in the pathway amino-acid biosynthesis; L-valine biosynthesis; L-valine from pyruvate: step 1/4. With respect to regulation, inhibited by asymmetric aryl disulfides, triazolopyrimidine sulfonanilide compounds, isatin derivatives, and sulfonylurea and imidazolinone herbicides. Insensitive to feed-back inhibition by branched-chain amino acids. Its function is as follows. Catalyzes the formation of acetolactate from pyruvate, the first step in valine and isoleucine biosynthesis. This chain is Acetolactate synthase, chloroplastic (ALS), found in Arabidopsis thaliana (Mouse-ear cress).